The chain runs to 557 residues: Dihydroxy-acid dehydratase (557 aa).

Residue D78 participates in Mg(2+) binding. C119 provides a ligand contact to [2Fe-2S] cluster. Mg(2+) is bound by residues D120 and K121. K121 is subject to N6-carboxylysine. C192 is a binding site for [2Fe-2S] cluster. A Mg(2+)-binding site is contributed by E442. The active-site Proton acceptor is the S468.

Belongs to the IlvD/Edd family. In terms of assembly, homodimer. It depends on [2Fe-2S] cluster as a cofactor. Mg(2+) is required as a cofactor.

It catalyses the reaction (2R)-2,3-dihydroxy-3-methylbutanoate = 3-methyl-2-oxobutanoate + H2O. The catalysed reaction is (2R,3R)-2,3-dihydroxy-3-methylpentanoate = (S)-3-methyl-2-oxopentanoate + H2O. Its pathway is amino-acid biosynthesis; L-isoleucine biosynthesis; L-isoleucine from 2-oxobutanoate: step 3/4. It participates in amino-acid biosynthesis; L-valine biosynthesis; L-valine from pyruvate: step 3/4. Functionally, functions in the biosynthesis of branched-chain amino acids. Catalyzes the dehydration of (2R,3R)-2,3-dihydroxy-3-methylpentanoate (2,3-dihydroxy-3-methylvalerate) into 2-oxo-3-methylpentanoate (2-oxo-3-methylvalerate) and of (2R)-2,3-dihydroxy-3-methylbutanoate (2,3-dihydroxyisovalerate) into 2-oxo-3-methylbutanoate (2-oxoisovalerate), the penultimate precursor to L-isoleucine and L-valine, respectively. The sequence is that of Dihydroxy-acid dehydratase from Bacillus cereus (strain 03BB102).